The sequence spans 217 residues: Probable GTP-binding protein EngB (217 aa).

An EngB-type G domain is found at Gly-29–Ile-213. GTP contacts are provided by residues Gly-37 to Ser-44, Gly-64 to Glu-68, Asp-91 to Gly-94, Thr-158 to Asp-161, and Thr-192 to Ser-194. Residues Ser-44 and Thr-66 each coordinate Mg(2+).

It belongs to the TRAFAC class TrmE-Era-EngA-EngB-Septin-like GTPase superfamily. EngB GTPase family. Mg(2+) is required as a cofactor.

Its function is as follows. Necessary for normal cell division and for the maintenance of normal septation. The sequence is that of Probable GTP-binding protein EngB from Rhizobium etli (strain ATCC 51251 / DSM 11541 / JCM 21823 / NBRC 15573 / CFN 42).